The primary structure comprises 301 residues: UDP-N-acetylenolpyruvoylglucosamine reductase (301 aa).

The 165-residue stretch at 30 to 194 (VGGEADYLVF…LSVKFALAPG (165 aa)) folds into the FAD-binding PCMH-type domain. Arginine 173 is a catalytic residue. Serine 223 serves as the catalytic Proton donor. Glutamate 293 is a catalytic residue.

Belongs to the MurB family. FAD serves as cofactor.

The protein localises to the cytoplasm. The enzyme catalyses UDP-N-acetyl-alpha-D-muramate + NADP(+) = UDP-N-acetyl-3-O-(1-carboxyvinyl)-alpha-D-glucosamine + NADPH + H(+). The protein operates within cell wall biogenesis; peptidoglycan biosynthesis. In terms of biological role, cell wall formation. The protein is UDP-N-acetylenolpyruvoylglucosamine reductase of Streptococcus pneumoniae (strain JJA).